We begin with the raw amino-acid sequence, 474 residues long: UDP-N-acetylmuramate--L-alanine ligase (474 aa).

ATP is bound at residue 108-114 (GTHGKTT).

It belongs to the MurCDEF family.

It is found in the cytoplasm. It catalyses the reaction UDP-N-acetyl-alpha-D-muramate + L-alanine + ATP = UDP-N-acetyl-alpha-D-muramoyl-L-alanine + ADP + phosphate + H(+). The protein operates within cell wall biogenesis; peptidoglycan biosynthesis. In terms of biological role, cell wall formation. The sequence is that of UDP-N-acetylmuramate--L-alanine ligase from Chloroflexus aggregans (strain MD-66 / DSM 9485).